A 327-amino-acid chain; its full sequence is MQQLEEVVGQAKAEIEGVNDVATLDEIRVKYLGKKGFFTEQMKTLGALSAEERPAAGAVINQAKQQVQDALNARRDALVEQELNQKLAAETIDVSLPGRRIENGGLHPVTRTIERIERLFGEMGFKVERGPEIEDGFHNFDALNIPAHHPARTDHDTFYFNPDLMLRTHTSGVQIRTMEHQQPPIRIIAPGRVYRNDYDMTHTPMFHQVEGLLVDEHASFTELKGILHDFLRNYFEEDLTIRFRPSYFPFTEPSAEVDVMGKNGKWLEVLGCGMVHPNVLRSVGIDPEKYSGFAFGMGVERLTMLRYGVNDLRAFFENDLRFLKQFK.

Glutamate 252 serves as a coordination point for Mg(2+).

It belongs to the class-II aminoacyl-tRNA synthetase family. Phe-tRNA synthetase alpha subunit type 1 subfamily. Tetramer of two alpha and two beta subunits. The cofactor is Mg(2+).

The protein resides in the cytoplasm. The catalysed reaction is tRNA(Phe) + L-phenylalanine + ATP = L-phenylalanyl-tRNA(Phe) + AMP + diphosphate + H(+). In Aeromonas salmonicida (strain A449), this protein is Phenylalanine--tRNA ligase alpha subunit.